A 930-amino-acid polypeptide reads, in one-letter code: Zn(2)-C6 fungal-type transcription factor FTF1c (930 aa).

The zn(2)-C6 fungal-type DNA-binding region spans 137–164 (CIPCRRKKIRCSGEKPACEHCLRSYIPC).

Its subcellular location is the nucleus. Zn(2)-C6 fungal-type transcription factor that has a role in the establishment of the fungus within the plant and/or the progress of the disease. Regulates the expression of virulence factors such as SIX1 and SIX6. This Fusarium oxysporum f. sp. lycopersici (strain 4287 / CBS 123668 / FGSC 9935 / NRRL 34936) (Fusarium vascular wilt of tomato) protein is Zn(2)-C6 fungal-type transcription factor FTF1c.